Here is a 281-residue protein sequence, read N- to C-terminus: MSFRERLEQTIAQNHSLLCIGLDPDLERFPTGIPRDPEGIVVFNRAIIEATADLVCAYKPNLAFYLQYGAAGIAALATTRQLIPPHIPVILDAKLGDIASTSAAYARAVFETLGFDALTVHPYLGSEALEPFLSTSDRGVFVLVRTSNPGASEIQDLPVGEAGEPLYLWLAERARAWNQRSGNVGLVVGATYPVDLALVRQRCPDLPILAPGIGAQGGDLERAVCAGLTEATAPLLVTVSRSILYADASARFAESARAAARRVRDTIERIRKEVAGQAGHR.

Lysine 94 (proton donor) is an active-site residue.

The protein belongs to the OMP decarboxylase family. Type 2 subfamily.

It carries out the reaction orotidine 5'-phosphate + H(+) = UMP + CO2. It functions in the pathway pyrimidine metabolism; UMP biosynthesis via de novo pathway; UMP from orotate: step 2/2. The polypeptide is Orotidine 5'-phosphate decarboxylase (Thermomicrobium roseum (strain ATCC 27502 / DSM 5159 / P-2)).